The following is a 190-amino-acid chain: UPF0301 protein Pfl01_5311 (190 aa).

This sequence belongs to the UPF0301 (AlgH) family.

This is UPF0301 protein Pfl01_5311 from Pseudomonas fluorescens (strain Pf0-1).